A 185-amino-acid polypeptide reads, in one-letter code: Male-enhanced antigen 1 (185 aa).

Disordered regions lie at residues 1 to 90 (MGPE…VGDG) and 104 to 134 (GLHLPDPPLESEDEDEEGATALNNHSSIPMD). 2 stretches are compositionally biased toward acidic residues: residues 50-60 (SSEEPEEEQEE) and 112-121 (LESEDEDEEG). At Ser114 the chain carries Phosphoserine.

Highly expressed in testis.

Its function is as follows. May play an important role in spermatogenesis and/or testis development. This is Male-enhanced antigen 1 (MEA1) from Homo sapiens (Human).